The sequence spans 679 residues: Stress-70 protein, mitochondrial (679 aa).

A mitochondrion-targeting transit peptide spans 1-46 (MISASRAAAARLVGAAASRGPTAARHQDSWNGLSHEAFRLVSRRDY). The interval 1–432 (MISASRAAAA…IQGGVLAGDV (432 aa)) is interaction with NFS1. Threonine 63 and asparagine 64 together coordinate ADP. The tract at residues 63 to 431 (TNSCVAVMEG…AIQGGVLAGD (369 aa)) is nucleotide-binding domain (NBD). The residue at position 76 (lysine 76) is an N6-acetyllysine. Threonine 87 bears the Phosphothreonine mark. An N6-acetyllysine; alternate mark is found at lysine 135 and lysine 138. Lysine 135 and lysine 138 each carry N6-succinyllysine; alternate. Lysine 143 carries the post-translational modification N6-acetyllysine. The residue at position 206 (lysine 206) is an N6-acetyllysine; alternate. Residue lysine 206 is modified to N6-succinyllysine; alternate. Lysine 206 bears the N6-malonyllysine; alternate mark. N6-acetyllysine occurs at positions 234 and 288. Position 300 is an N6-acetyllysine; alternate (lysine 300). Residue lysine 300 is modified to N6-succinyllysine; alternate. 3 residues coordinate ADP: glutamate 313, lysine 316, and serine 320. Residue lysine 368 is modified to N6-succinyllysine. Residues glycine 388 and arginine 391 each contribute to the ADP site. The residue at position 394 (lysine 394) is an N6-succinyllysine. The residue at position 408 (serine 408) is a Phosphoserine. The tract at residues 432 to 441 (VTDVLLLDVT) is interdomain linker. Residues 432-679 (VTDVLLLDVT…QKEDQKEEKQ (248 aa)) form an interaction with FXN and ISCU region. The tract at residues 442 to 679 (PLSLGIETLG…QKEDQKEEKQ (238 aa)) is substrate-binding domain (SBD). Arginine 513 carries the omega-N-methylarginine modification. 2 positions are modified to N6-acetyllysine; alternate: lysine 567 and lysine 600. 2 positions are modified to N6-succinyllysine; alternate: lysine 567 and lysine 600. Lysine 610 carries the post-translational modification N6-succinyllysine. Lysine 612 is modified (N6-acetyllysine). Lysine 646 bears the N6-acetyllysine; alternate mark. Lysine 646 is subject to N6-succinyllysine; alternate. The tract at residues 656-679 (ASEREGSGSSGTGEQKEDQKEEKQ) is disordered. Basic and acidic residues predominate over residues 669 to 679 (EQKEDQKEEKQ).

It belongs to the heat shock protein 70 family. Interacts strongly with the intermediate form of FXN and weakly with its mature form. Interacts with HSCB. Associates with the mitochondrial contact site and cristae organizing system (MICOS) complex, composed of at least MICOS10/MIC10, CHCHD3/MIC19, CHCHD6/MIC25, APOOL/MIC27, IMMT/MIC60, APOO/MIC23/MIC26 and QIL1/MIC13. This complex was also known under the names MINOS or MitOS complex. The MICOS complex associates with mitochondrial outer membrane proteins SAMM50, MTX1, MTX2 and DNAJC11, mitochondrial inner membrane protein TMEM11 and with HSPA9. Interacts with DNLZ, the interaction is required to prevent self-aggregation. Interacts with TESPA1. Interacts with PDPN. Interacts with NFU1, NFS1 and ISCU. Interacts with TP53; the interaction promotes TP53 degradation. Interacts (via SBD domain) with UBXN2A; the interaction with UBXN2A inhibits HSPA9 interaction with and degradation of TP53, thereby promotes TP53 translocation to the nucleus. Interacts with ITPR1 AND VDAC1; this interaction couples ITPR1 to VDAC1. Component of the TIM23 mitochondrial inner membrane pre-sequence translocase complex.

The protein resides in the mitochondrion. It is found in the nucleus. Its subcellular location is the nucleolus. The protein localises to the cytoplasm. It localises to the mitochondrion matrix. The enzyme catalyses ATP + H2O = ADP + phosphate + H(+). The chaperone activity is regulated by ATP-induced allosteric coupling of the nucleotide-binding (NBD) and substrate-binding (SBD) domains. ATP binding in the NBD leads to a conformational change in the NBD, which is transferred through the interdomain linker (IDL) to the substrate-binding domain (SBD). This elicits a reduced substrate affinity and a faster substrate exchange rate. Upon hydrolysis of ATP to ADP, the protein undergoes a conformational change that increases its affinity for substrate proteins. It cycles through repeated phases of ATP hydrolysis and nucleotide exchange, facilitating repeated cycles of substrate binding and release. Functions in collaboration with co-chaperones. Functions with the co-chaperone, DNLZ, to maintain solubility and regulate ATP hydrolysis. Nucleotide exchange factors, GRPEL1 and GRPEL2, accelerate nucleotide exchange. Mitochondrial chaperone that plays a key role in mitochondrial protein import, folding, and assembly. Plays an essential role in the protein quality control system, the correct folding of proteins, the re-folding of misfolded proteins, and the targeting of proteins for subsequent degradation. These processes are achieved through cycles of ATP binding, ATP hydrolysis, and ADP release, mediated by co-chaperones. In mitochondria, it associates with the TIM (translocase of the inner membrane) protein complex to assist in the import and folding of mitochondrial proteins. Plays an important role in mitochondrial iron-sulfur cluster (ISC) biogenesis, interacts with and stabilizes ISC cluster assembly proteins FXN, NFU1, NFS1 and ISCU. Regulates erythropoiesis via stabilization of ISC assembly. Regulates mitochondrial calcium-dependent apoptosis by coupling two calcium channels, ITPR1 and VDAC1, at the mitochondria-associated endoplasmic reticulum (ER) membrane to facilitate calcium transport from the ER lumen to the mitochondria intermembrane space, providing calcium for the downstream calcium channel MCU, which releases it into the mitochondrial matrix. Although primarily located in the mitochondria, it is also found in other cellular compartments. In the cytosol, it associates with proteins involved in signaling, apoptosis, or senescence. It may play a role in cell cycle regulation via its interaction with and promotion of degradation of TP53. May play a role in the control of cell proliferation and cellular aging. Protects against reactive oxygen species (ROS). Extracellular HSPA9 plays a cytoprotective role by preventing cell lysis following immune attack by the membrane attack complex by disrupting formation of the complex. In Homo sapiens (Human), this protein is Stress-70 protein, mitochondrial.